A 60-amino-acid chain; its full sequence is UPF0337 protein SAV1625 (60 aa).

The interval 18 to 41 is disordered; that stretch reads VGNVTDNKELEKEGQQDKATGKAK. A compositionally biased stretch (basic and acidic residues) spans 23-41; that stretch reads DNKELEKEGQQDKATGKAK.

This sequence belongs to the UPF0337 (CsbD) family.

The sequence is that of UPF0337 protein SAV1625 from Staphylococcus aureus (strain Mu50 / ATCC 700699).